Reading from the N-terminus, the 109-residue chain is Aquaporin-2 (109 aa).

At 1–6 (SIAFSR) the chain is on the cytoplasmic side. The helical transmembrane segment at 7–27 (AVFSEFLATLLFVFFGLGSAL) threads the bilayer. Over 28–35 (NWPQALPS) the chain is Extracellular. The helical transmembrane segment at 36-54 (VLQIAMAFGLAIGTLVQTL) threads the bilayer. The Cytoplasmic portion of the chain corresponds to 55–59 (GHISG). The discontinuously helical intramembrane region spans 60 to 69 (AHINPAVTVA). The short motif at 63 to 65 (NPA) is the NPA 1 element. Over 70–80 (CLVGCHVSFLR) the chain is Cytoplasmic. Residues 81–102 (ATFYLAAQLLGAVAGAALLHEL) traverse the membrane as a helical segment. Topologically, residues 103–109 (TPPDIRG) are extracellular.

It belongs to the MIP/aquaporin (TC 1.A.8) family. In terms of assembly, homotetramer. Serine phosphorylation is necessary and sufficient for expression at the apical membrane. Endocytosis is not phosphorylation-dependent. In terms of processing, N-glycosylated.

Its subcellular location is the apical cell membrane. The protein localises to the basolateral cell membrane. The protein resides in the cell membrane. It is found in the cytoplasmic vesicle membrane. It localises to the golgi apparatus. Its subcellular location is the trans-Golgi network membrane. The catalysed reaction is H2O(in) = H2O(out). It catalyses the reaction glycerol(in) = glycerol(out). Its function is as follows. Forms a water-specific channel that provides the plasma membranes of renal collecting duct with high permeability to water, thereby permitting water to move in the direction of an osmotic gradient. Plays an essential role in renal water homeostasis. Could also be permeable to glycerol. This Elephas maximus (Indian elephant) protein is Aquaporin-2.